Here is a 306-residue protein sequence, read N- to C-terminus: Recombination-associated protein RdgC (306 aa).

This sequence belongs to the RdgC family.

It is found in the cytoplasm. The protein localises to the nucleoid. May be involved in recombination. This chain is Recombination-associated protein RdgC, found in Pseudomonas aeruginosa (strain ATCC 15692 / DSM 22644 / CIP 104116 / JCM 14847 / LMG 12228 / 1C / PRS 101 / PAO1).